An 862-amino-acid polypeptide reads, in one-letter code: Protein translocase subunit SecA (862 aa).

Residues Gln88, 106–110 (GEGKT), and Asp506 each bind ATP. Cys839, Cys841, Cys850, and His851 together coordinate Zn(2+).

It belongs to the SecA family. Monomer and homodimer. Part of the essential Sec protein translocation apparatus which comprises SecA, SecYEG and auxiliary proteins SecDF-YajC and YidC. It depends on Zn(2+) as a cofactor.

It localises to the cell inner membrane. Its subcellular location is the cytoplasm. It carries out the reaction ATP + H2O + cellular proteinSide 1 = ADP + phosphate + cellular proteinSide 2.. Functionally, part of the Sec protein translocase complex. Interacts with the SecYEG preprotein conducting channel. Has a central role in coupling the hydrolysis of ATP to the transfer of proteins into and across the cell membrane, serving as an ATP-driven molecular motor driving the stepwise translocation of polypeptide chains across the membrane. This is Protein translocase subunit SecA from Campylobacter jejuni subsp. doylei (strain ATCC BAA-1458 / RM4099 / 269.97).